Reading from the N-terminus, the 245-residue chain is Sec-independent protein translocase protein TatC (245 aa).

6 consecutive transmembrane segments (helical) span residues 17–37 (FISVACIVVMFIVCFALRSYI), 73–93 (FFAAFIFSLPVIFWQFWKFVA), 107–127 (FVSFASIMFAFGACFCYFVVV), 159–179 (VVVAFGLAFEMPVIAFFFAKI), 191–207 (FRIAVLVIFVFSAFMTP), and 210–230 (VLSQFLMAGPLCGLYGLSILI).

Belongs to the TatC family. In terms of assembly, the Tat system comprises two distinct complexes: a TatABC complex, containing multiple copies of TatA, TatB and TatC subunits, and a separate TatA complex, containing only TatA subunits. Substrates initially bind to the TatABC complex, which probably triggers association of the separate TatA complex to form the active translocon.

It is found in the cell inner membrane. Part of the twin-arginine translocation (Tat) system that transports large folded proteins containing a characteristic twin-arginine motif in their signal peptide across membranes. Together with TatB, TatC is part of a receptor directly interacting with Tat signal peptides. This Campylobacter jejuni subsp. jejuni serotype O:2 (strain ATCC 700819 / NCTC 11168) protein is Sec-independent protein translocase protein TatC.